Consider the following 276-residue polypeptide: MKLLEQMVYVECFMIIMATLLVSMSYGHRAMINDVAEAPVIDNVGSPTNGLDSSWYDARATFYGDIHGGETQQGACGYGDLFKQGYGLETAALSTALFNEGYTCGACYQIMCVHDPQWCLPGTIKITATNFCPPDYSKTEGVWCNPPQKHFDLSLPMFLKIAQYKAGVVPVKYRRISCARTGGVKFETKGNPYFLMILPYNVGGAGDIKLMQVKGDKTGWITMQKNWGQNWTTGVNLTGQGISFRVTTSDGVTKDFNNVMPNNWGFGQTFDGKINF.

Positions M1–G27 are cleaved as a signal peptide. The Expansin-like EG45 domain maps to Q73 to G183. Residues Y193–G272 form the Expansin-like CBD domain.

It belongs to the expansin family. Expansin A subfamily.

It localises to the secreted. It is found in the cell wall. The protein localises to the membrane. Functionally, causes loosening and extension of plant cell walls by disrupting non-covalent bonding between cellulose microfibrils and matrix glucans. No enzymatic activity has been found. The sequence is that of Expansin-A25 (EXPA25) from Arabidopsis thaliana (Mouse-ear cress).